A 95-amino-acid chain; its full sequence is Large ribosomal subunit protein eL31 (95 aa).

It belongs to the eukaryotic ribosomal protein eL31 family.

The sequence is that of Large ribosomal subunit protein eL31 (rpl31e) from Pyrococcus horikoshii (strain ATCC 700860 / DSM 12428 / JCM 9974 / NBRC 100139 / OT-3).